Here is an 89-residue protein sequence, read N- to C-terminus: Small ribosomal subunit protein uS15 (89 aa).

The disordered stretch occupies residues 1 to 23 (MTLNTQEKQKLINTHQNHGTDTG).

This sequence belongs to the universal ribosomal protein uS15 family. In terms of assembly, part of the 30S ribosomal subunit. Forms a bridge to the 50S subunit in the 70S ribosome, contacting the 23S rRNA.

In terms of biological role, one of the primary rRNA binding proteins, it binds directly to 16S rRNA where it helps nucleate assembly of the platform of the 30S subunit by binding and bridging several RNA helices of the 16S rRNA. Its function is as follows. Forms an intersubunit bridge (bridge B4) with the 23S rRNA of the 50S subunit in the ribosome. The sequence is that of Small ribosomal subunit protein uS15 from Prochlorococcus marinus (strain MIT 9211).